We begin with the raw amino-acid sequence, 121 residues long: ORF8 protein (121 aa).

An N-terminal signal peptide occupies residues 1–15 (MKFLVFLGIITTVAA). The SARS ORF8 Ig-like domain occupies 19 to 121 (ECSLQSCTQH…HDVRVVLDFI (103 aa)). 3 disulfide bridges follow: cysteine 25/cysteine 90, cysteine 37/cysteine 102, and cysteine 61/cysteine 83. An N-linked (GlcNAc...) (complex) asparagine; by host glycan is attached at asparagine 78.

In terms of assembly, homodimer. Interacts with host IL17RA. Interacts with host IL17RC. Interacts with host MHC-I. In terms of processing, glycosylated by the host when secreted via the conventional pathway. The glycosylated form cannot bind IL17A and would not participate in the cytokine storm.

It is found in the secreted. In terms of biological role, plays a role in modulating the host immune response. May act as a secreted virokine by mimicking interleukin-17A (IL17A), and thereby binding to the IL17RA receptor, leading to activation of the IL17 pathway and increased secretion of pro-inflammatory factors. Contributes to the cytokine storm during SARS-CoV-2 infection when secreted by unconventional pathway. May act by down-regulating major histocompability complex class I (MHC-I) at cell surface. May inhibit expression of some members of the IFN-stimulated gene (ISG) family including hosts IGF2BP1/ZBP1, MX1 and MX2, and DHX58. The chain is ORF8 protein from Severe acute respiratory syndrome coronavirus 2 (2019-nCoV).